The sequence spans 251 residues: Ubiquinone/menaquinone biosynthesis C-methyltransferase UbiE (251 aa).

Residues threonine 74, aspartate 95, and asparagine 123–alanine 124 contribute to the S-adenosyl-L-methionine site.

It belongs to the class I-like SAM-binding methyltransferase superfamily. MenG/UbiE family.

It carries out the reaction a 2-demethylmenaquinol + S-adenosyl-L-methionine = a menaquinol + S-adenosyl-L-homocysteine + H(+). The catalysed reaction is a 2-methoxy-6-(all-trans-polyprenyl)benzene-1,4-diol + S-adenosyl-L-methionine = a 5-methoxy-2-methyl-3-(all-trans-polyprenyl)benzene-1,4-diol + S-adenosyl-L-homocysteine + H(+). It participates in quinol/quinone metabolism; menaquinone biosynthesis; menaquinol from 1,4-dihydroxy-2-naphthoate: step 2/2. It functions in the pathway cofactor biosynthesis; ubiquinone biosynthesis. In terms of biological role, methyltransferase required for the conversion of demethylmenaquinol (DMKH2) to menaquinol (MKH2) and the conversion of 2-polyprenyl-6-methoxy-1,4-benzoquinol (DDMQH2) to 2-polyprenyl-3-methyl-6-methoxy-1,4-benzoquinol (DMQH2). The polypeptide is Ubiquinone/menaquinone biosynthesis C-methyltransferase UbiE (Shewanella frigidimarina (strain NCIMB 400)).